The sequence spans 71 residues: Sec-independent protein translocase protein TatA (71 aa).

The chain crosses the membrane as a helical span at residues 1–21 (MGSFSLLHWLVVLVIVLLVFG). Residues 43-71 (LREDDKPTDQLGSTSQSTASGPQQDHGKH) form a disordered region. Residues 52–65 (QLGSTSQSTASGPQ) show a composition bias toward polar residues.

Belongs to the TatA/E family. The Tat system comprises two distinct complexes: a TatABC complex, containing multiple copies of TatA, TatB and TatC subunits, and a separate TatA complex, containing only TatA subunits. Substrates initially bind to the TatABC complex, which probably triggers association of the separate TatA complex to form the active translocon.

The protein resides in the cell inner membrane. Its function is as follows. Part of the twin-arginine translocation (Tat) system that transports large folded proteins containing a characteristic twin-arginine motif in their signal peptide across membranes. TatA could form the protein-conducting channel of the Tat system. The polypeptide is Sec-independent protein translocase protein TatA (Xylella fastidiosa (strain 9a5c)).